We begin with the raw amino-acid sequence, 2528 residues long: Squalestatin tetraketide synthase clz2 (2528 aa).

A Ketosynthase family 3 (KS3) domain is found at 14–409; that stretch reads TVPIAIVGMS…GANAHVILES (396 aa). Residues C187, H291, and H331 each act as for beta-ketoacyl synthase activity in the active site. The segment at 420–457 is disordered; the sequence is VNGHHQKNGTTNGHKGANGTTNELNGTNGTANGHDITT. Positions 436–452 are enriched in low complexity; sequence ANGTTNELNGTNGTANG. The tract at residues 538 to 856 is malonyl-CoA:ACP transacylase (MAT) domain; sequence GAQWFAMGRE…PYLSCLLRGQ (319 aa). The interval 925–1063 is N-terminal hotdog fold; the sequence is HDLLGSLIPG…GRIAIELDTS (139 aa). Positions 925–1239 constitute a PKS/mFAS DH domain; that stretch reads HDLLGSLIPG…NQSVGQIALQ (315 aa). Residues 925 to 1239 are dehydratase (DH) domain; it reads HDLLGSLIPG…NQSVGQIALQ (315 aa). The active-site Proton acceptor; for dehydratase activity is the H957. Residues 1083-1239 form a C-terminal hotdog fold region; it reads TRSVDPSNLY…NQSVGQIALQ (157 aa). The active-site Proton donor; for dehydratase activity is D1148. The segment at 1390-1590 is methyltransferase (CMet) domain; the sequence is LYRYYTDAIK…GLDVELRDCD (201 aa). An enoyl reductase (ER) (ER) domain region spans residues 1817–2130; sequence GLIDTLQFSK…AGKHMGKIVI (314 aa). A ketoreductase (KR) domain region spans residues 2153-2331; that stretch reads ASYLIVGGLG…AVSIDLGMVQ (179 aa). The disordered stretch occupies residues 2408–2430; that stretch reads RARDAKEQSNSQGGGTDSKISPG. The Carrier domain occupies 2441–2518; it reads EAIDVVGRAI…ALATTVATKS (78 aa). At S2478 the chain carries O-(pantetheine 4'-phosphoryl)serine.

The protein operates within secondary metabolite biosynthesis. Highly reducing polyketide synthase (HR-PKS); part of the gene cluster that mediates the biosynthesis of squalestatin S1 (SQS1, also known as zaragozic acid A), a heavily oxidized fungal polyketide that offers potent cholesterol lowering activity by targeting squalene synthase (SS). SQS1 is composed of a 2,8-dioxobicyclic[3.2.1]octane-3,4,5-tricarboxyclic acid core that is connected to two lipophilic polyketide arms. These initial steps feature the priming of an unusual benzoic acid starter unit onto the highly reducing polyketide synthase clz14, followed by oxaloacetate extension and product release to generate a tricarboxylic acid containing product. The phenylalanine ammonia lyase (PAL) clz10 and the acyl-CoA ligase clz12 are involved in transforming phenylalanine into benzoyl-CoA. The citrate synthase-like protein clz17 is involved in connecting the C-alpha-carbons of the hexaketide chain and oxaloacetate to afford the tricarboxylic acid unit. The potential hydrolytic enzymes, clz11 and clz13, are in close proximity to pks2 and may participate in product release. On the other side, the tetraketide arm is synthesized by a the squalestatin tetraketide synthase clz2 and enzymatically esterified to the core in the last biosynthetic step, by the acetyltransferase clz6. The biosynthesis of the tetraketide must involve 3 rounds of chain extension. After the first and second rounds methyl-transfer occurs, and in all rounds of extension the ketoreductase and dehydratase are active. The enoyl reductase and C-MeT of clz2 are not active in the final round of extension. The acetyltransferase clz6 appears to have a broad substrate selectivity for its acyl CoA substrate, allowing the in vitro synthesis of novel squalestatins. The biosynthesis of SQS1 requires several oxidative steps likely performed by oxidoreductases clz3, clz15 and clz16. Finally, in support of the identification of the cluster as being responsible for SQS1 production, the cluster contains a gene encoding a putative squalene synthase (SS) clz20, suggesting a likely mechanism for self-resistance. This Cochliobolus lunatus (Filamentous fungus) protein is Squalestatin tetraketide synthase clz2.